The primary structure comprises 118 residues: T cell receptor gamma variable 8 (118 aa).

The N-terminal stretch at 1–17 (MLLALALLLAFLPPASQ) is a signal peptide. One can recognise an Ig-like domain in the interval 18–118 (KSSNLEGRTK…GVYYCATWDR (101 aa)). Residues Cys-41 and Cys-113 are joined by a disulfide bond.

Gamma-delta TR is a heterodimer composed of a gamma and delta chain; disulfide-linked. The gamma-delta TR is associated with the transmembrane signaling CD3 coreceptor proteins following the stoichiometry: a single gamma-delta TR heterodimer associates with one CD3D-CD3E heterodimer, one CD3G-CD3E heterodimer and one CD247 homodimer forming a stable octameric structure. Upon activation, gamma-delta TR complex associates with FCER1G to initiate intracellular signaling.

The protein resides in the cell membrane. In terms of biological role, v region of the variable domain of T cell receptor (TR) gamma chain that participates in the antigen recognition. Gamma-delta TRs recognize a variety of self and foreign non-peptide antigens frequently expressed at the epithelial boundaries between the host and external environment, including endogenous lipids presented by MH-like protein CD1D and phosphoantigens presented by butyrophilin-like molecule BTN3A1. Upon antigen recognition induces rapid, innate-like immune responses involved in pathogen clearance and tissue repair. Binding of gamma-delta TR complex to antigen triggers phosphorylation of immunoreceptor tyrosine-based activation motifs (ITAMs) in the CD3 chains by the LCK and FYN kinases, allowing the recruitment, phosphorylation, and activation of ZAP70 that facilitates phosphorylation of the scaffolding proteins LCP2 and LAT. This lead to the formation of a supramolecular signalosome that recruits the phospholipase PLCG1, resulting in calcium mobilization and ERK activation, ultimately leading to T cell expansion and differentiation into effector cells. Gamma-delta TRs are produced through somatic rearrangement of a limited repertoire of variable (V), diversity (D), and joining (J) genes. The potential diversity of gamma-delta TRs is conferred by the unique ability to rearrange (D) genes in tandem and to utilize all three reading frames. The combinatorial diversity is considerably increased by the sequence exonuclease trimming and random nucleotide (N) region additions which occur during the V-(D)-J rearrangements. This Homo sapiens (Human) protein is T cell receptor gamma variable 8.